The primary structure comprises 143 residues: Submaxillary gland androgen-regulated protein 2, isoform gamma (143 aa).

The signal sequence occupies residues 1 to 22; the sequence is MKALYMVFVLWVLIGCFLSSEC. A disordered region spans residues 28-50; the sequence is GQHDPTRPLSPSNPSSHFYPQPD. A compositionally biased stretch (polar residues) spans 36 to 45; that stretch reads LSPSNPSSHF.

It localises to the secreted. May play a role in protection or detoxification. The chain is Submaxillary gland androgen-regulated protein 2, isoform gamma (Smr2) from Mus musculus (Mouse).